Consider the following 1370-residue polypeptide: DNA-directed RNA polymerase subunit beta (1370 aa).

Belongs to the RNA polymerase beta chain family. The RNAP catalytic core consists of 2 alpha, 1 beta, 1 beta' and 1 omega subunit. When a sigma factor is associated with the core the holoenzyme is formed, which can initiate transcription.

The enzyme catalyses RNA(n) + a ribonucleoside 5'-triphosphate = RNA(n+1) + diphosphate. Functionally, DNA-dependent RNA polymerase catalyzes the transcription of DNA into RNA using the four ribonucleoside triphosphates as substrates. This is DNA-directed RNA polymerase subunit beta from Bordetella petrii (strain ATCC BAA-461 / DSM 12804 / CCUG 43448).